A 69-amino-acid polypeptide reads, in one-letter code: Small, acid-soluble spore protein C1 (69 aa).

It belongs to the alpha/beta-type SASP family.

In terms of biological role, SASP are bound to spore DNA. They are double-stranded DNA-binding proteins that cause DNA to change to an a-like conformation. They protect the DNA backbone from chemical and enzymatic cleavage and are thus involved in dormant spore's high resistance to UV light. The sequence is that of Small, acid-soluble spore protein C1 (SASP-C1) from Priestia megaterium (Bacillus megaterium).